The following is a 250-amino-acid chain: 2-(R)-hydroxypropyl-CoM dehydrogenase (250 aa).

Residues 12-14 (SGN), aspartate 33, 60-61 (DV), and asparagine 87 each bind NAD(+). Arginine 152 is a binding site for 2-oxopropyl-coenzyme M. The active-site Proton acceptor is tyrosine 155. 188–192 (IETPM) contributes to the NAD(+) binding site. 195–196 (WR) serves as a coordination point for 2-oxopropyl-coenzyme M.

Belongs to the short-chain dehydrogenases/reductases (SDR) family. In terms of assembly, homodimer in solution. Homotetramer. Component III of the aliphatic epoxide carboxylation complex together with components I, II and IV.

The catalysed reaction is (R)-2-hydroxypropyl-coenzyme M + NAD(+) = 2-oxopropyl-coenzyme M + NADH + H(+). It functions in the pathway alkene metabolism; propylene degradation. Its activity is regulated as follows. Inhibited by the arginine-specific modifiers 2,3-butanedione and phenylglyoxal. 2-(2-methyl-2-hydroxypropylthio)ethanesulfonate (M-HPC), an achiral analog of both R-HPC and S-HPC, and (2S)-2-hydroxypropyl-coenzyme M (S-HPC) are competitive inhibitors. Inhibited (at 70%) by the coenzyme M analog 2-bromoethanesulfonate (BES). In terms of biological role, involved in aliphatic epoxide carboxylation. Catalyzes the reversible oxidation of (R)-2-hydroxypropyl-coenzyme M (R-HPC) to 2-oxopropyl-coenzyme M (2-KPC). The enzyme is highly specific for the R enantiomers. In vitro can also use achiral 2-propanol and short-chain (R)- and (S)-2-alkanols. The polypeptide is 2-(R)-hydroxypropyl-CoM dehydrogenase (Xanthobacter autotrophicus (strain ATCC BAA-1158 / Py2)).